A 206-amino-acid chain; its full sequence is Uracil phosphoribosyltransferase (206 aa).

5-phospho-alpha-D-ribose 1-diphosphate contacts are provided by residues Arg-76, Arg-101, and 128 to 136; that span reads DPMLATGGS. Uracil-binding positions include Ile-191 and 196–198; that span reads GDA. Position 197 (Asp-197) interacts with 5-phospho-alpha-D-ribose 1-diphosphate.

It belongs to the UPRTase family. Mg(2+) serves as cofactor.

The enzyme catalyses UMP + diphosphate = 5-phospho-alpha-D-ribose 1-diphosphate + uracil. The protein operates within pyrimidine metabolism; UMP biosynthesis via salvage pathway; UMP from uracil: step 1/1. Its activity is regulated as follows. Allosterically activated by GTP. Its function is as follows. Catalyzes the conversion of uracil and 5-phospho-alpha-D-ribose 1-diphosphate (PRPP) to UMP and diphosphate. The sequence is that of Uracil phosphoribosyltransferase from Malacoplasma penetrans (strain HF-2) (Mycoplasma penetrans).